Reading from the N-terminus, the 58-residue chain is Potassium channel toxin alpha-KTx 9.9 (58 aa).

The N-terminal stretch at 1–21 is a signal peptide; it reads KKTSRLFTLVLIVLAMNVMMA. The propeptide occupies 22-30; the sequence is IISDPVVEA. Intrachain disulfides connect C33–C49, C36–C54, and C40–C56.

It belongs to the short scorpion toxin superfamily. Potassium channel inhibitor family. Alpha-KTx 09 subfamily. Expressed by the venom gland.

The protein resides in the secreted. In terms of biological role, potassium channel inhibitor. This is Potassium channel toxin alpha-KTx 9.9 from Buthus israelis (Israeli scorpion).